Consider the following 1114-residue polypeptide: MRDKKGPVNKRVDFLSNKLNKYSIRKFTVGTASILIGSLMYLGTQQEAEAAENNIENPTTLKDNVQSKEVKIEEVTNKDTAPQGVEAKSEVTSNKDTIEHEASVKAEDISKKEDTPKEVANVAEVQPKSSVTHNAEAPKVRKARSVDEGSFDITRDSKNVVESTPITIQGKEHFEGYGSVDIQKNPTDLGVSEVTRFNVGNESNGLIGALQLKNKIDFSKDFNFKVRVANNHQSNTTGADGWGFLFSKGNAEEYLTNGGILGDKGLVNSGGFKIDTGYIYTSSMDKTEKQAGQGYRGYGAFVKNDSSGNSQMVGENIDKSKTNFLNYADNSTNTSDGKFHGQRLNDVILTYVASTGKMRAEYAGKTWETSITDLGLSKNQAYNFLITSSQRWGLNQGINANGWMRTDLKGSEFTFTPRSAKNNNRIRKKVEEIPFKKERKFNPDLAPGTEKVTREGQKGEKTITTPTLKNPLTGEIISKGESKEEITKDPINELTEYGPETIAPGHRDEFDPKLPTGEKEEVPGKPGIKNPETGDVVRPPVDSVTKYGPVKGDSIVEKEEIPFEKERKFNPDLAPGTEKVTREGQKGEKTTTPTLKNPLTGEIISKGESKEEITKDPINELTEYGPETIAPGHRDEFDPKLPTGEKEEVPGKPGIKNPETGDVVRPPVDSVTKYGPVKGDSIVEKEEIPFKKERKFNPDLAPGTEKVTREGQKGEKTITTPTLKNPLTGEIISKGESKEEITKDPINELTEYGPETITPGHRDEFDPKLPTGEKEEVPGKPGIKNPETGDVVRPPVDSVTKYGPVKGDSIVEKEEIPFEKERKFNPDLAPGTEKVTREGQKGEKTITTPTLKNPLTGEIISKGESKEEITKDPVNELTEFGGEKIPQGHKDIFDPNLPTDQTEKVPGKPGIKNPDTGKVIEEPVDDVIKHGPKTGTPETKTVEIPFETKREFNPKLQPGEERVKQEGQPGSKTITTPITVNPLTGEKVGEGQPTEEITKQPVDKIVEFGGEKPKDPKGPENPEKPSRPTHPSGPVNPNNPGLSKDRAKPNGPVHSMDKNDKVKKSKIAKESVANQEKKRAELPKTGLESTQKGLIFSSIIGIAGLMLLARRRKN.

The first 50 residues, 1-50 (MRDKKGPVNKRVDFLSNKLNKYSIRKFTVGTASILIGSLMYLGTQQEAEA), serve as a signal peptide directing secretion. 3 disordered regions span residues 76–116 (TNKD…EDTP), 440–473 (KFNP…NPLT), and 496–1088 (EYGP…TGLE). 5 stretches are compositionally biased toward basic and acidic residues: residues 96–116 (DTIE…EDTP), 451–461 (KVTREGQKGEK), 505–523 (GHRD…EEVP), 554–570 (SIVE…RKFN), and 579–589 (KVTREGQKGEK). In terms of domain architecture, G5 1 spans 419–501 (SAKNNNRIRK…NELTEYGPET (83 aa)). One can recognise a G5 2 domain in the interval 547–628 (YGPVKGDSIV…NELTEYGPET (82 aa)). Over residues 590-604 (TTTPTLKNPLTGEII) the composition is skewed to low complexity. 11 stretches are compositionally biased toward basic and acidic residues: residues 605–618 (SKGE…KDPI), 632–650 (GHRD…EEVP), 681–697 (SIVE…RKFN), 706–716 (KVTREGQKGEK), 733–746 (SKGE…KDPI), 760–778 (GHRD…EEVP), 809–825 (SIVE…RKFN), 834–844 (KVTREGQKGEK), 861–874 (SKGE…KDPV), 918–929 (KVIEEPVDDVIK), and 946–965 (FETK…RVKQ). A G5 3 domain is found at 674 to 756 (YGPVKGDSIV…NELTEYGPET (83 aa)). The G5 4 domain occupies 802–884 (YGPVKGDSIV…NELTEFGGEK (83 aa)). The G5 5 domain maps to 930–1012 (HGPKTGTPET…DKIVEFGGEK (83 aa)). Over residues 968–982 (QPGSKTITTPITVNP) the composition is skewed to polar residues. A compositionally biased stretch (basic and acidic residues) spans 996–1026 (EITKQPVDKIVEFGGEKPKDPKGPENPEKPS). Residues 1082 to 1086 (LPKTG) carry the LPXTG sorting signal motif. The residue at position 1085 (Thr1085) is a Pentaglycyl murein peptidoglycan amidated threonine. Residues 1086 to 1114 (GLESTQKGLIFSSIIGIAGLMLLARRRKN) constitute a propeptide, removed by sortase.

The protein localises to the secreted. The protein resides in the cell wall. The polypeptide is Putative surface protein SAV2496/SAV2497 (Staphylococcus aureus (strain Mu50 / ATCC 700699)).